Consider the following 31-residue polypeptide: uncharacterized protein (31 aa).

This is an uncharacterized protein from Archaeoglobus fulgidus (strain ATCC 49558 / DSM 4304 / JCM 9628 / NBRC 100126 / VC-16).